The primary structure comprises 417 residues: Tryptophan synthase beta chain (417 aa).

Position 99 is an N6-(pyridoxal phosphate)lysine (Lys-99).

It belongs to the TrpB family. In terms of assembly, tetramer of two alpha and two beta chains. It depends on pyridoxal 5'-phosphate as a cofactor.

The enzyme catalyses (1S,2R)-1-C-(indol-3-yl)glycerol 3-phosphate + L-serine = D-glyceraldehyde 3-phosphate + L-tryptophan + H2O. The protein operates within amino-acid biosynthesis; L-tryptophan biosynthesis; L-tryptophan from chorismate: step 5/5. Functionally, the beta subunit is responsible for the synthesis of L-tryptophan from indole and L-serine. This chain is Tryptophan synthase beta chain, found in Corynebacterium glutamicum (strain R).